A 451-amino-acid polypeptide reads, in one-letter code: Tubulin beta-1 chain (451 aa).

GTP-binding residues include Q11, E73, S142, G146, T147, G148, N208, and N230. E73 contacts Mg(2+). The interval 430-451 (QEATADDEAEFEEEGEVEGEYA) is disordered. The span at 433-451 (TADDEAEFEEEGEVEGEYA) shows a compositional bias: acidic residues.

This sequence belongs to the tubulin family. In terms of assembly, dimer of alpha and beta chains. A typical microtubule is a hollow water-filled tube with an outer diameter of 25 nm and an inner diameter of 15 nM. Alpha-beta heterodimers associate head-to-tail to form protofilaments running lengthwise along the microtubule wall with the beta-tubulin subunit facing the microtubule plus end conferring a structural polarity. Microtubules usually have 13 protofilaments but different protofilament numbers can be found in some organisms and specialized cells. The cofactor is Mg(2+).

The protein localises to the cytoplasm. The protein resides in the cytoskeleton. Its function is as follows. Tubulin is the major constituent of microtubules, a cylinder consisting of laterally associated linear protofilaments composed of alpha- and beta-tubulin heterodimers. Microtubules grow by the addition of GTP-tubulin dimers to the microtubule end, where a stabilizing cap forms. Below the cap, tubulin dimers are in GDP-bound state, owing to GTPase activity of alpha-tubulin. The sequence is that of Tubulin beta-1 chain from Homarus americanus (American lobster).